The following is a 365-amino-acid chain: Mitogen-activated protein kinase HOG1A (365 aa).

The Protein kinase domain maps to 24–303 (YTDLQPVGMG…AADALAHPYL (280 aa)). Residues 30–38 (VGMGAFGLL) and Lys53 contribute to the ATP site. Residue Asp145 is the Proton acceptor of the active site. Phosphothreonine is present on Thr175. Residues 175–177 (TGY) carry the TXY motif. Tyr177 carries the post-translational modification Phosphotyrosine.

The protein belongs to the protein kinase superfamily. Ser/Thr protein kinase family. MAP kinase subfamily. HOG1 sub-subfamily. The cofactor is Mg(2+). Post-translationally, phosphorylated. Dually phosphorylated on Thr-175 and Tyr-177, which activates the enzyme. Rapidly dephosphorylated upon either hypo- or hyperosmotic shock.

The protein localises to the cytoplasm. It is found in the nucleus. It carries out the reaction L-seryl-[protein] + ATP = O-phospho-L-seryl-[protein] + ADP + H(+). The catalysed reaction is L-threonyl-[protein] + ATP = O-phospho-L-threonyl-[protein] + ADP + H(+). With respect to regulation, activated by tyrosine and threonine phosphorylation. In terms of biological role, proline-directed serine/threonine-protein kinase involved in a signal transduction pathway that is activated by changes in the osmolarity of the extracellular environment. Controls osmotic regulation of transcription of target genes. This Wallemia ichthyophaga (strain EXF-994 / CBS 113033) protein is Mitogen-activated protein kinase HOG1A (HOG1A).